Here is a 428-residue protein sequence, read N- to C-terminus: Cytochrome bc complex cytochrome b subunit (428 aa).

Low complexity-rich tracts occupy residues 1 to 15 and 21 to 52; these read MAEN…TAPA and APGA…AAAP. Residues 1–72 are disordered; the sequence is MAENTPKPAA…RPDPNPFKDS (72 aa). A compositionally biased stretch (basic and acidic residues) spans 59 to 72; sequence PPVDRPDPNPFKDS. Residues 110–130 traverse the membrane as a helical segment; sequence YFGGLGLFFFVIQILTGLLLL. Heme b is bound by residues His161 and His175. 6 helical membrane passes run 162-182, 193-213, 260-280, 312-331, 369-389, and 401-421; these read AWSA…TFFM, WVSG…GYLL, LHVV…LTLV, GIGW…MFPW, ELLA…VPFI, and IFTI…YRVY. Heme b contacts are provided by His261 and His276.

The protein belongs to the cytochrome b family. The cofactor is heme b.

It localises to the cell inner membrane. Component of the green S-bacteria bc complex, which consists of the Rieske protein and cytochrome b subunit but appears to lack a cytochrome c1-equivalent. This complex has a comparatively low redox potential. This is Cytochrome bc complex cytochrome b subunit (petB) from Chlorobaculum thiosulfatiphilum (Chlorobium limicola f.sp. thiosulfatophilum).